Here is a 265-residue protein sequence, read N- to C-terminus: Transmembrane protein 270 (265 aa).

3 helical membrane-spanning segments follow: residues 72 to 92 (PLGQALWAGLALIQVPVWLVL), 130 to 150 (LFLSCLHGLMLVALLLVVVTW), and 185 to 205 (LYWWVETMTALTSWHLAYLIT). The disordered stretch occupies residues 229–265 (QEVEPQEVSGSSLLPSLSASSDSESGTVLPEQETPRE). Residues 237 to 253 (SGSSLLPSLSASSDSES) show a composition bias toward low complexity.

It is found in the membrane. In Homo sapiens (Human), this protein is Transmembrane protein 270.